The following is a 2742-amino-acid chain: Neurobeachin-like protein 2 (2742 aa).

Disordered regions lie at residues 1312 to 1333 and 1356 to 1434; these read ALSP…PSES and LERA…QQTP. Over residues 1384–1394 the composition is skewed to pro residues; that stretch reads TPSPLDGPRPF. The span at 1421–1433 shows a compositional bias: polar residues; the sequence is GDDTSNTSNPQQT. Thr-1855 carries the post-translational modification Phosphothreonine. One can recognise a BEACH-type PH domain in the interval 1903-2028; sequence EKREKLVLSA…LRNQVYSLLL (126 aa). Positions 2041–2333 constitute a BEACH domain; the sequence is RSPLEMLRAS…QLLKEPHPPR (293 aa). 7 WD repeats span residues 2374–2412, 2436–2479, 2482–2519, 2532–2570, 2577–2619, 2627–2662, and 2670–2705; these read LVLA…TWLP, KLLS…SLPR, LLNQ…VWRL, KPVQ…IHTV, AALR…TYSL, RLRA…ILHL, and PPLP…VGAG. 2 positions are modified to phosphoserine: Ser-2727 and Ser-2730.

This sequence belongs to the WD repeat neurobeachin family.

The protein resides in the endoplasmic reticulum. Probably involved in thrombopoiesis. Plays a role in the development or secretion of alpha-granules, that contain several growth factors important for platelet biogenesis. This chain is Neurobeachin-like protein 2 (Nbeal2), found in Mus musculus (Mouse).